The following is a 286-amino-acid chain: Shikimate dehydrogenase (NADP(+)) (286 aa).

Shikimate is bound by residues 21–23 (TLS) and Thr68. Lys72 serves as the catalytic Proton acceptor. Position 84 (Glu84) interacts with NADP(+). Positions 93 and 108 each coordinate shikimate. NADP(+) contacts are provided by residues 132–136 (GNGGA) and Leu230. Position 232 (Tyr232) interacts with shikimate. Gly253 contacts NADP(+).

It belongs to the shikimate dehydrogenase family. As to quaternary structure, homodimer.

It carries out the reaction shikimate + NADP(+) = 3-dehydroshikimate + NADPH + H(+). It functions in the pathway metabolic intermediate biosynthesis; chorismate biosynthesis; chorismate from D-erythrose 4-phosphate and phosphoenolpyruvate: step 4/7. In terms of biological role, involved in the biosynthesis of the chorismate, which leads to the biosynthesis of aromatic amino acids. Catalyzes the reversible NADPH linked reduction of 3-dehydroshikimate (DHSA) to yield shikimate (SA). This chain is Shikimate dehydrogenase (NADP(+)), found in Microcystis aeruginosa (strain NIES-843 / IAM M-2473).